A 345-amino-acid chain; its full sequence is Phosphoribosylformylglycinamidine cyclo-ligase (345 aa).

Belongs to the AIR synthase family.

It is found in the cytoplasm. It carries out the reaction 2-formamido-N(1)-(5-O-phospho-beta-D-ribosyl)acetamidine + ATP = 5-amino-1-(5-phospho-beta-D-ribosyl)imidazole + ADP + phosphate + H(+). It participates in purine metabolism; IMP biosynthesis via de novo pathway; 5-amino-1-(5-phospho-D-ribosyl)imidazole from N(2)-formyl-N(1)-(5-phospho-D-ribosyl)glycinamide: step 2/2. This Staphylococcus carnosus (strain TM300) protein is Phosphoribosylformylglycinamidine cyclo-ligase.